We begin with the raw amino-acid sequence, 417 residues long: MTSALLEDLRWRGLIYQETHPEEMEALLNKESVSVYCGTDPTADSLHIGHLLPFMTLKRFQAHGHRPVVLIGGATGMIGDPSGRTDERTLQTLAQVQHNVDGISKQMEQLFDFGTENGAIRVDNKDWLGKIDLLTFLRDYGKHVGVNYLLNKDSIASRLETGISFTEFTYTILQAIDFGHLNKTLNVKLQIGGSDQWGNITSGMELMRRMYGEVEAYGMTVPLVVKSDGKKFGKSEGGAVWLDRTKTTPYEFYQFWINTPDSDVIKFLKYFTFLSKEEIDALETSVENEPHLRLAQKRLAEEVTKYVHDESALEEAVNITDALFKGDLKALTADQLRTSFKDVPQAKVTTTNLVELLIEAGISPSKRQAREDITNGAISINGEKVQDVAYEIVATDKIEDEFTIIRRGKKKYFMIIH.

Y36 is a binding site for L-tyrosine. Residues 41 to 50 (PTADSLHIGH) carry the 'HIGH' region motif. L-tyrosine-binding residues include Y170 and Q174. The 'KMSKS' region signature appears at 231 to 235 (KFGKS). K234 provides a ligand contact to ATP. In terms of domain architecture, S4 RNA-binding spans 351–417 (TNLVELLIEA…GKKKYFMIIH (67 aa)).

The protein belongs to the class-I aminoacyl-tRNA synthetase family. TyrS type 1 subfamily. Homodimer.

The protein localises to the cytoplasm. The enzyme catalyses tRNA(Tyr) + L-tyrosine + ATP = L-tyrosyl-tRNA(Tyr) + AMP + diphosphate + H(+). Its function is as follows. Catalyzes the attachment of tyrosine to tRNA(Tyr) in a two-step reaction: tyrosine is first activated by ATP to form Tyr-AMP and then transferred to the acceptor end of tRNA(Tyr). This is Tyrosine--tRNA ligase from Macrococcus caseolyticus (strain JCSC5402) (Macrococcoides caseolyticum).